A 65-amino-acid polypeptide reads, in one-letter code: Small ribosomal subunit protein bS21 (65 aa).

Residues 43-52 show a composition bias toward basic and acidic residues; it reads EKKRVKEALA. The interval 43–65 is disordered; the sequence is EKKRVKEALARKRSRKKARKEQD. Residues 53–65 show a composition bias toward basic residues; the sequence is RKRSRKKARKEQD.

It belongs to the bacterial ribosomal protein bS21 family.

In Koribacter versatilis (strain Ellin345), this protein is Small ribosomal subunit protein bS21.